The following is a 58-amino-acid chain: Small ribosomal subunit protein bS21 (58 aa).

Residues 36 to 58 are disordered; the sequence is EHYEKPSVKRKKKSEAARRRKYR. A compositionally biased stretch (basic residues) spans 43-58; it reads VKRKKKSEAARRRKYR.

This sequence belongs to the bacterial ribosomal protein bS21 family.

This is Small ribosomal subunit protein bS21 from Symbiobacterium thermophilum (strain DSM 24528 / JCM 14929 / IAM 14863 / T).